The chain runs to 634 residues: Chaperone protein DnaK (634 aa).

T197 is subject to Phosphothreonine; by autocatalysis. The tract at residues 592–634 (IGSSVYQQPGNQPPAPGGPNANASDDKGPDDDVIDADFTETKD) is disordered. The segment covering 619-634 (GPDDDVIDADFTETKD) has biased composition (acidic residues).

It belongs to the heat shock protein 70 family.

Acts as a chaperone. The sequence is that of Chaperone protein DnaK from Prochlorococcus marinus (strain MIT 9515).